A 408-amino-acid polypeptide reads, in one-letter code: GTPase Obg (408 aa).

The Obg domain occupies 1 to 159 (MKFVDEVSIR…RDLKMEMKVL (159 aa)). Residues 127–150 (NTRFKSSTNRAPRQTTPGKPGDQR) form a disordered region. The span at 129–143 (RFKSSTNRAPRQTTP) shows a compositional bias: polar residues. One can recognise an OBG-type G domain in the interval 160–333 (ADVGLLGLPN…LSHDLMRYLE (174 aa)). GTP-binding positions include 166–173 (GLPNAGKS), 191–195 (FTTLV), 213–216 (DIPG), 283–286 (NKSD), and 314–316 (SAI). 2 residues coordinate Mg(2+): S173 and T193. The interval 382 to 408 (HDIGDDDGWDDDFEDDEDGPEIIYVRD) is disordered. Residues 385–401 (GDDDGWDDDFEDDEDGP) are compositionally biased toward acidic residues.

Belongs to the TRAFAC class OBG-HflX-like GTPase superfamily. OBG GTPase family. Monomer. Mg(2+) serves as cofactor.

It localises to the cytoplasm. An essential GTPase which binds GTP, GDP and possibly (p)ppGpp with moderate affinity, with high nucleotide exchange rates and a fairly low GTP hydrolysis rate. Plays a role in control of the cell cycle, stress response, ribosome biogenesis and in those bacteria that undergo differentiation, in morphogenesis control. The chain is GTPase Obg from Pseudomonas putida (strain GB-1).